The sequence spans 395 residues: MRALRLVTSESVTEGHPDKLADRISDAILDALIAQDKKARVAAETLVTTGLVFVAGEITTEGYVDIPNLVRKTVREVGYTRAKYGFDADTCAVLTAIDEQSPDIAGGVNLSYEWRVLKSTDPLDRVGAGDQGLMFGYATDETPELMPLPITLAHRLTMRLAEVRKTGLLPYLRPDGKAQVTVVYEGDKPLYVKTVVVSAQHSPEVEQEQLREDLIREVVRQAIPPEYLKDGETEYLINPSGRFILGGPHADTGLTGRKIIVDTYGGAVPHGGGAFSGKDPTKVDRSASYYARYMAKNIVAAGLARRALVELAYAIGKARPVSLRVETFGTGVLPDEKLTEIAKKVFDPRPLAIIEELDLLRPIYTPTSAYGHFGRPGFPWEETDRVEALRREAGL.

An ATP-binding site is contributed by His-16. Asp-18 contacts Mg(2+). Position 44 (Glu-44) interacts with K(+). Positions 57 and 100 each coordinate L-methionine. The interval 100–110 (QSPDIAGGVNL) is flexible loop. ATP-binding positions include 175 to 177 (DGK), 242 to 243 (RF), Asp-251, 257 to 258 (RK), Ala-274, and Lys-278. Asp-251 is an L-methionine binding site. Lys-282 is a binding site for L-methionine.

The protein belongs to the AdoMet synthase family. In terms of assembly, homotetramer; dimer of dimers. Mg(2+) serves as cofactor. K(+) is required as a cofactor.

Its subcellular location is the cytoplasm. The catalysed reaction is L-methionine + ATP + H2O = S-adenosyl-L-methionine + phosphate + diphosphate. It participates in amino-acid biosynthesis; S-adenosyl-L-methionine biosynthesis; S-adenosyl-L-methionine from L-methionine: step 1/1. Its function is as follows. Catalyzes the formation of S-adenosylmethionine (AdoMet) from methionine and ATP. The overall synthetic reaction is composed of two sequential steps, AdoMet formation and the subsequent tripolyphosphate hydrolysis which occurs prior to release of AdoMet from the enzyme. This is S-adenosylmethionine synthase from Thermus thermophilus (strain ATCC BAA-163 / DSM 7039 / HB27).